A 276-amino-acid polypeptide reads, in one-letter code: Putative ankyrin repeat protein R838 (276 aa).

ANK repeat units follow at residues 134–163, 164–193, 195–223, and 225–253; these read DGDN…DPRS, DYDY…DISS, NHWP…DVRA, and NYNP…EIGS. A disordered region spans residues 254-276; it reads VSDDDTYDSDSSDYSEDDSESIN. Residues 255–276 show a composition bias toward acidic residues; sequence SDDDTYDSDSSDYSEDDSESIN.

This is Putative ankyrin repeat protein R838 from Acanthamoeba polyphaga (Amoeba).